A 316-amino-acid polypeptide reads, in one-letter code: MKILLANPRGFCAGVDRAISIVERALELYQPPIYVRHEVVHNRFVVEGLKQRGAIFVEELHEVPDDNIVIFSAHGVSQAVRQEAKERALTVFDATCPLVTKVHMEVARASRKHMEVVLIGHAGHPEVEGTMGQYASLQGGMYLVEKPEDVLGLKAIVKDPSNLHYVSQTTLSVDETADVIDELRRVFPEIQGPRKDDICYATQNRQDAVRELAKDVDVVVVVGSKNSSNSTRLKELAEKLGTPAYLTDCPQDIEPQWFDGKVKVGVTAGASAPEELVNQILTRIKELGAQSVEEVLGREENMFFEVPKELQIKQID.

C12 lines the [4Fe-4S] cluster pocket. Residues H41 and H74 each contribute to the (2E)-4-hydroxy-3-methylbut-2-enyl diphosphate site. Dimethylallyl diphosphate-binding residues include H41 and H74. The isopentenyl diphosphate site is built by H41 and H74. Residue C96 participates in [4Fe-4S] cluster binding. H124 contributes to the (2E)-4-hydroxy-3-methylbut-2-enyl diphosphate binding site. H124 is a binding site for dimethylallyl diphosphate. H124 is an isopentenyl diphosphate binding site. E126 serves as the catalytic Proton donor. T169 contacts (2E)-4-hydroxy-3-methylbut-2-enyl diphosphate. C199 contacts [4Fe-4S] cluster. Residues S227, S228, N229, and S271 each contribute to the (2E)-4-hydroxy-3-methylbut-2-enyl diphosphate site. Residues S227, S228, N229, and S271 each contribute to the dimethylallyl diphosphate site. Isopentenyl diphosphate contacts are provided by S227, S228, N229, and S271.

Belongs to the IspH family. Requires [4Fe-4S] cluster as cofactor.

It catalyses the reaction isopentenyl diphosphate + 2 oxidized [2Fe-2S]-[ferredoxin] + H2O = (2E)-4-hydroxy-3-methylbut-2-enyl diphosphate + 2 reduced [2Fe-2S]-[ferredoxin] + 2 H(+). The catalysed reaction is dimethylallyl diphosphate + 2 oxidized [2Fe-2S]-[ferredoxin] + H2O = (2E)-4-hydroxy-3-methylbut-2-enyl diphosphate + 2 reduced [2Fe-2S]-[ferredoxin] + 2 H(+). Its pathway is isoprenoid biosynthesis; dimethylallyl diphosphate biosynthesis; dimethylallyl diphosphate from (2E)-4-hydroxy-3-methylbutenyl diphosphate: step 1/1. It participates in isoprenoid biosynthesis; isopentenyl diphosphate biosynthesis via DXP pathway; isopentenyl diphosphate from 1-deoxy-D-xylulose 5-phosphate: step 6/6. Its function is as follows. Catalyzes the conversion of 1-hydroxy-2-methyl-2-(E)-butenyl 4-diphosphate (HMBPP) into a mixture of isopentenyl diphosphate (IPP) and dimethylallyl diphosphate (DMAPP). Acts in the terminal step of the DOXP/MEP pathway for isoprenoid precursor biosynthesis. This Vibrio vulnificus (strain CMCP6) protein is 4-hydroxy-3-methylbut-2-enyl diphosphate reductase.